The primary structure comprises 200 residues: Pyridoxal 5'-phosphate synthase subunit PdxT (200 aa).

52-54 (GES) contributes to the L-glutamine binding site. The Nucleophile role is filled by Cys-84. L-glutamine contacts are provided by residues Arg-116 and 145–146 (IR). Catalysis depends on charge relay system residues His-181 and Glu-183.

Belongs to the glutaminase PdxT/SNO family. In terms of assembly, in the presence of PdxS, forms a dodecamer of heterodimers. Only shows activity in the heterodimer.

The enzyme catalyses aldehydo-D-ribose 5-phosphate + D-glyceraldehyde 3-phosphate + L-glutamine = pyridoxal 5'-phosphate + L-glutamate + phosphate + 3 H2O + H(+). It catalyses the reaction L-glutamine + H2O = L-glutamate + NH4(+). Its pathway is cofactor biosynthesis; pyridoxal 5'-phosphate biosynthesis. Functionally, catalyzes the hydrolysis of glutamine to glutamate and ammonia as part of the biosynthesis of pyridoxal 5'-phosphate. The resulting ammonia molecule is channeled to the active site of PdxS. This chain is Pyridoxal 5'-phosphate synthase subunit PdxT, found in Saccharolobus islandicus (strain L.S.2.15 / Lassen #1) (Sulfolobus islandicus).